Here is a 563-residue protein sequence, read N- to C-terminus: Arginine--tRNA ligase (563 aa).

Positions 121-131 (PNIAKPFSIGH) match the 'HIGH' region motif.

It belongs to the class-I aminoacyl-tRNA synthetase family. Monomer.

It localises to the cytoplasm. It catalyses the reaction tRNA(Arg) + L-arginine + ATP = L-arginyl-tRNA(Arg) + AMP + diphosphate. This is Arginine--tRNA ligase from Streptococcus agalactiae serotype Ia (strain ATCC 27591 / A909 / CDC SS700).